A 284-amino-acid chain; its full sequence is NAD kinase (284 aa).

The active-site Proton acceptor is aspartate 70. NAD(+) is bound by residues 70-71 (DG), 139-140 (NE), lysine 167, aspartate 169, leucine 177, 180-185 (TAYNLS), and glutamine 236.

It belongs to the NAD kinase family. A divalent metal cation serves as cofactor.

The protein localises to the cytoplasm. The catalysed reaction is NAD(+) + ATP = ADP + NADP(+) + H(+). In terms of biological role, involved in the regulation of the intracellular balance of NAD and NADP, and is a key enzyme in the biosynthesis of NADP. Catalyzes specifically the phosphorylation on 2'-hydroxyl of the adenosine moiety of NAD to yield NADP. In Helicobacter pylori (strain J99 / ATCC 700824) (Campylobacter pylori J99), this protein is NAD kinase.